A 407-amino-acid polypeptide reads, in one-letter code: Protein-glutamine gamma-glutamyltransferase (407 aa).

The first 31 residues, 1 to 31 (MRIRRRALVFATMSAVLCTAGFMPSAGEAAA), serve as a signal peptide directing secretion. Positions 32 to 76 (DNGAGEETKSYAETYRLTADDVANINALNESAPAASSAGPSFRAP) are excised as a propeptide. Over residues 62 to 72 (SAPAASSAGPS) the composition is skewed to low complexity. A disordered region spans residues 62 to 98 (SAPAASSAGPSFRAPDSDDRVTPPAEPLDRMPDPYRP). Over residues 76 to 94 (PDSDDRVTPPAEPLDRMPD) the composition is skewed to basic and acidic residues. Residue Cys-140 is part of the active site. The disordered stretch occupies residues 282-322 (QDRSSSADKRKYGDPDAFRPAPGTGLVDMSRDRNIPRSPTS). The segment covering 286–298 (SSADKRKYGDPDA) has biased composition (basic and acidic residues). Active-site residues include Asp-331 and His-350.

The protein belongs to the bacterial TGase family.

The enzyme catalyses L-glutaminyl-[protein] + L-lysyl-[protein] = [protein]-L-lysyl-N(6)-5-L-glutamyl-[protein] + NH4(+). Its function is as follows. Catalyzes the cross-linking of proteins and the conjugation of polyamines to proteins. The sequence is that of Protein-glutamine gamma-glutamyltransferase from Streptomyces mobaraensis (Streptoverticillium mobaraense).